Reading from the N-terminus, the 131-residue chain is SPbeta prophage-derived UPF0715 membrane protein YopD (131 aa).

4 consecutive transmembrane segments (helical) span residues 12–32, 38–58, 75–95, and 108–128; these read VYTL…YLFV, AIAL…YLVF, LINF…FWFV, and FEYY…DSIF.

It belongs to the UPF0715 family.

It localises to the cell membrane. The protein is SPbeta prophage-derived UPF0715 membrane protein YopD (yopD) of Bacillus subtilis (strain 168).